Consider the following 689-residue polypeptide: Glycine--tRNA ligase beta subunit (689 aa).

The protein belongs to the class-II aminoacyl-tRNA synthetase family. In terms of assembly, tetramer of two alpha and two beta subunits.

The protein resides in the cytoplasm. It catalyses the reaction tRNA(Gly) + glycine + ATP = glycyl-tRNA(Gly) + AMP + diphosphate. This Salmonella arizonae (strain ATCC BAA-731 / CDC346-86 / RSK2980) protein is Glycine--tRNA ligase beta subunit.